A 53-amino-acid chain; its full sequence is Rubredoxin (53 aa).

A Rubredoxin-like domain is found at 1-52; the sequence is MAKWRCKICGYIYDEDEGDPDNGISPGTKFEDLPDDWVCPLCGAPKSEFERI. Positions 6, 9, 39, and 42 each coordinate Fe cation.

It belongs to the rubredoxin family. Requires Fe(3+) as cofactor.

Rubredoxin is a small nonheme, iron protein lacking acid-labile sulfide. Its single Fe, chelated to 4 Cys, functions as an electron acceptor and may also stabilize the conformation of the molecule. The sequence is that of Rubredoxin (rub) from Pyrococcus abyssi (strain GE5 / Orsay).